The sequence spans 369 residues: Glutamate 5-kinase (369 aa).

ATP is bound at residue Lys-9. Substrate contacts are provided by Ser-49, Asp-136, and Asn-148. ATP-binding positions include 168 to 169 (TD) and 210 to 216 (TGGMLTK). The region spanning 275–355 (RGSVYVDEGA…KGVFIHRDDW (81 aa)) is the PUA domain.

The protein belongs to the glutamate 5-kinase family.

The protein localises to the cytoplasm. It carries out the reaction L-glutamate + ATP = L-glutamyl 5-phosphate + ADP. The protein operates within amino-acid biosynthesis; L-proline biosynthesis; L-glutamate 5-semialdehyde from L-glutamate: step 1/2. Functionally, catalyzes the transfer of a phosphate group to glutamate to form L-glutamate 5-phosphate. This is Glutamate 5-kinase from Neisseria meningitidis serogroup C / serotype 2a (strain ATCC 700532 / DSM 15464 / FAM18).